The primary structure comprises 351 residues: Outer membrane protein A (351 aa).

Positions 1–21 are cleaved as a signal peptide; that stretch reads MKKTAIAITVALAGFATVAQA. Beta stranded transmembrane passes span 27–37, 55–66, 70–78, 96–107, 112–120, 147–156, 161–168, and 187–195; these read TWYTGAKLGWS, QLGAGAFGGYQV, VGFEMGYDW, QGVQLTAKLGYP, LDVYTRLGG, PVFAGGVEWA, IATRLEYQ, and LLSLGVSYR. 4 tandem repeats follow at residues 206–207, 208–209, 210–211, and 212–213. The 4 X 2 AA tandem repeats of A-P stretch occupies residues 206-213; that stretch reads APAPAPAP. The 129-residue stretch at 215-343 folds into the OmpA-like domain; sequence VQTKHFTLKS…RVEIEVKGIK (129 aa). Cys-316 and Cys-328 are oxidised to a cystine.

Belongs to the outer membrane OOP (TC 1.B.6) superfamily. OmpA family. Monomer and homodimer.

It localises to the cell outer membrane. Its function is as follows. With TolR probably plays a role in maintaining the position of the peptidoglycan cell wall in the periplasm. Acts as a porin with low permeability that allows slow penetration of small solutes; an internal gate slows down solute passage. Required for conjugation with F-type plasmids; probably serves as the mating receptor on recipient cells. The protein is Outer membrane protein A of Shigella dysenteriae.